Reading from the N-terminus, the 212-residue chain is Large ribosomal subunit protein bL25 (212 aa).

Positions 190-212 (IAEAGDALAEPEVISKGSGEADE) are disordered.

The protein belongs to the bacterial ribosomal protein bL25 family. CTC subfamily. Part of the 50S ribosomal subunit; part of the 5S rRNA/L5/L18/L25 subcomplex. Contacts the 5S rRNA. Binds to the 5S rRNA independently of L5 and L18.

Its function is as follows. This is one of the proteins that binds to the 5S RNA in the ribosome where it forms part of the central protuberance. This chain is Large ribosomal subunit protein bL25, found in Rhodopirellula baltica (strain DSM 10527 / NCIMB 13988 / SH1).